The chain runs to 326 residues: Protoheme IX farnesyltransferase (326 aa).

8 helical membrane-spanning segments follow: residues Leu-35–Leu-55, Leu-60–Leu-80, Ser-106–Val-126, Leu-129–Leu-149, Ile-157–Gly-177, Trp-185–Leu-205, Gly-242–Phe-262, and Ala-283–Leu-303.

It belongs to the UbiA prenyltransferase family. Protoheme IX farnesyltransferase subfamily.

It is found in the cell inner membrane. It catalyses the reaction heme b + (2E,6E)-farnesyl diphosphate + H2O = Fe(II)-heme o + diphosphate. It functions in the pathway porphyrin-containing compound metabolism; heme O biosynthesis; heme O from protoheme: step 1/1. Functionally, converts heme B (protoheme IX) to heme O by substitution of the vinyl group on carbon 2 of heme B porphyrin ring with a hydroxyethyl farnesyl side group. The polypeptide is Protoheme IX farnesyltransferase (Parasynechococcus marenigrum (strain WH8102)).